The primary structure comprises 78 residues: UPF0349 protein ABC2936 (78 aa).

It belongs to the UPF0349 family.

The protein is UPF0349 protein ABC2936 of Shouchella clausii (strain KSM-K16) (Alkalihalobacillus clausii).